A 3567-amino-acid chain; its full sequence is Erythronolide synthase EryA2 (3567 aa).

One can recognise a Ketosynthase family 3 (KS3) 1 domain in the interval 30-455; sequence SDPIAIVSMA…GTNAHVIVEE (426 aa). Module stretches follow at residues 33–1467 and 1491–3485; these read IAIV…QHLR and IAIV…EHLR. Catalysis depends on cysteine 202, which acts as the Acyl-thioester intermediate; for beta-ketoacyl synthase 1 activity. Catalysis depends on for beta-ketoacyl synthase 1 activity residues histidine 337 and histidine 377. The tract at residues 560–880 is acyltransferase 1; the sequence is VFLFPGQGSQ…MATAHVSGVD (321 aa). Serine 651 serves as the catalytic Acyl-ester intermediate; for acyltransferase 1 activity. The C2-type beta-ketoacyl reductase 1 stretch occupies residues 1132–1297; sequence GTVLVTGAAS…CTSVAWTPWA (166 aa). Residue tyrosine 1267 is the For C2-type beta-ketoacyl reductase 1 and probable racemase activity of the active site. The disordered stretch occupies residues 1364–1385; it reads GRGGQAEAEPDSGPTGEPAQRL. A Carrier 1 domain is found at 1395 to 1470; sequence ENLLELVANA…ALAQHLRARL (76 aa). Position 1430 is an O-(pantetheine 4'-phosphoryl)serine (serine 1430). One can recognise a Ketosynthase family 3 (KS3) 2 domain in the interval 1488–1912; that stretch reads SEPIAIVGIG…GTNAHVIVEE (425 aa). Residue cysteine 1661 is the Acyl-thioester intermediate; for beta-ketoacyl synthase 2 activity of the active site. Residues histidine 1796 and histidine 1834 each act as for beta-ketoacyl synthase 2 activity in the active site. The acyltransferase 2 stretch occupies residues 2015–2331; sequence LVFPGQGAQW…NLLRAHVHGV (317 aa). The active-site Acyl-ester intermediate; for acyltransferase 2 activity is the serine 2105. An N-terminal hotdog fold region spans residues 2377–2502; that stretch reads HPLLLAAVDV…GTLAQGVAAG (126 aa). The tract at residues 2377–2645 is dehydratase; sequence HPLLLAAVDV…SLVVRSTGEK (269 aa). The PKS/mFAS DH domain occupies 2377–2648; it reads HPLLLAAVDV…VRSTGEKWEQ (272 aa). Residue histidine 2409 is the Proton acceptor; for dehydratase activity of the active site. The C-terminal hotdog fold stretch occupies residues 2514–2648; that stretch reads AVRIPLDDHY…VRSTGEKWEQ (135 aa). Aspartate 2571 serves as the catalytic Proton donor; for dehydratase activity. Positions 2831-3131 are enoyl reductase; that stretch reads GAIDSVAFEP…RGRHVGKLVL (301 aa). Catalysis depends on tyrosine 2874, which acts as the For enoyl reductase activity. NADP(+) is bound by residues 2964–2973, 3149–3152, 3173–3176, 3202–3203, lysine 3250, and 3272–3273; these read HAAAGGVGMA, TGTL, SRRG, DT, and FS. A beta-ketoacyl reductase 2 region spans residues 3141–3317; it reads GTVLITGGTG…AKALGWGLWA (177 aa). Tyrosine 3287 (for beta-ketoacyl reductase 2 activity) is an active-site residue. One can recognise a Carrier 2 domain in the interval 3413–3488; it reads AGLAELVRSH…AVAEHLRDRL (76 aa). Serine 3448 is modified (O-(pantetheine 4'-phosphoryl)serine).

In terms of assembly, homodimer. Erythronolide synthase is composed of EryAI, EryAII and EryAIII multimodular (2 modules) polypeptides each coding for a functional synthase subunit which participates in 2 of the six FAS-like elongation steps required for formation of the polyketide. Module 1, 2, 3, 4, 5, and 6 participating in biosynthesis steps 1, 2, 3, 4, 5, and 6, respectively. It depends on pantetheine 4'-phosphate as a cofactor.

It carries out the reaction 6 (S)-methylmalonyl-CoA + propanoyl-CoA + 6 NADPH + 12 H(+) = 6-deoxyerythronolide B + 6 CO2 + 6 NADP(+) + 7 CoA + H2O. Its pathway is antibiotic biosynthesis; erythromycin biosynthesis. Functionally, involved in the biosynthesis of antibiotic erythromycin via the biosynthesis of its aglycone precursor, 6-deoxyerythronolide B (6-dEB). This chain is Erythronolide synthase EryA2, found in Saccharopolyspora erythraea (Streptomyces erythraeus).